The primary structure comprises 120 residues: MGKRTPRELRLRRHNRIRKRVSGTPERPRLNVFRSHAHIYAQVIDDTVGHTLVAASTIEKGWSGSPELTKTQEAALVGKLIAERALQAGITKVVFDRGGYKYHGRVKALAEAAREAGLNF.

Belongs to the universal ribosomal protein uL18 family. As to quaternary structure, part of the 50S ribosomal subunit; part of the 5S rRNA/L5/L18/L25 subcomplex. Contacts the 5S and 23S rRNAs.

This is one of the proteins that bind and probably mediate the attachment of the 5S RNA into the large ribosomal subunit, where it forms part of the central protuberance. In Chloroflexus aggregans (strain MD-66 / DSM 9485), this protein is Large ribosomal subunit protein uL18.